The following is a 338-amino-acid chain: 1-aminocyclopropane-1-carboxylate deaminase (338 aa).

Residue Lys-51 is modified to N6-(pyridoxal phosphate)lysine. Catalysis depends on Ser-78, which acts as the Nucleophile.

Belongs to the ACC deaminase/D-cysteine desulfhydrase family. Pyridoxal 5'-phosphate serves as cofactor.

The enzyme catalyses 1-aminocyclopropane-1-carboxylate + H2O = 2-oxobutanoate + NH4(+). Its function is as follows. Catalyzes a cyclopropane ring-opening reaction, the irreversible conversion of 1-aminocyclopropane-1-carboxylate (ACC) to ammonia and alpha-ketobutyrate. Allows growth on ACC as a nitrogen source. The protein is 1-aminocyclopropane-1-carboxylate deaminase of Enterobacter cloacae.